We begin with the raw amino-acid sequence, 750 residues long: Phosphate transporter PHO1 homolog 7 (750 aa).

In terms of domain architecture, SPX spans methionine 1–glutamate 298. Residues methionine 1 to threonine 350 are Cytoplasmic-facing. Residues phenylalanine 351–isoleucine 371 traverse the membrane as a helical segment. Over histidine 372 to proline 391 the chain is Extracellular. The helical transmembrane segment at leucine 392–phenylalanine 412 threads the bilayer. Over tryptophan 413–arginine 435 the chain is Cytoplasmic. The helical transmembrane segment at histidine 436–leucine 456 threads the bilayer. The Extracellular segment spans residues aspartate 457–glutamate 472. Residues leucine 473–phenylalanine 493 form a helical membrane-spanning segment. The Cytoplasmic portion of the chain corresponds to tyrosine 494 to lysine 622. Residues arginine 557–serine 750 enclose the EXS domain. A helical membrane pass occupies residues isoleucine 623–phenylalanine 643. Topologically, residues aspartate 644–alanine 666 are extracellular. The chain crosses the membrane as a helical span at residues valine 667 to leucine 687. Topologically, residues aspartate 688–serine 750 are cytoplasmic.

Belongs to the SYG1 (TC 2.A.94) family. As to expression, expressed in root tips, vascular cylinders of roots and filaments, leaf hydathodes, stem, receptacle and stigma apex.

Its subcellular location is the cell membrane. May transport inorganic phosphate (Pi). In Arabidopsis thaliana (Mouse-ear cress), this protein is Phosphate transporter PHO1 homolog 7 (PHO1-H7).